A 162-amino-acid chain; its full sequence is Regulator of sigma D (162 aa).

The protein belongs to the Rsd/AlgQ family. In terms of assembly, interacts with RpoD.

It localises to the cytoplasm. Binds RpoD and negatively regulates RpoD-mediated transcription activation by preventing the interaction between the primary sigma factor RpoD with the catalytic core of the RNA polymerase and with promoter DNA. May be involved in replacement of the RNA polymerase sigma subunit from RpoD to RpoS during the transition from exponential growth to the stationary phase. The protein is Regulator of sigma D of Salmonella choleraesuis (strain SC-B67).